The sequence spans 377 residues: Chaperone protein DnaJ (377 aa).

One can recognise a J domain in the interval 5–70 (DYYEILGVSK…QKRAAYDQYG (66 aa)). A CR-type zinc finger spans residues 132–210 (GVTKEIRIPT…CHGHGRVEKT (79 aa)). The Zn(2+) site is built by C145, C148, C162, C165, C184, C187, C198, and C201. CXXCXGXG motif repeat units lie at residues 145–152 (CDVCHGSG), 162–169 (CPTCHGAG), 184–191 (CPHCQGRG), and 198–205 (CNKCHGHG).

This sequence belongs to the DnaJ family. Homodimer. It depends on Zn(2+) as a cofactor.

Its subcellular location is the cytoplasm. In terms of biological role, participates actively in the response to hyperosmotic and heat shock by preventing the aggregation of stress-denatured proteins and by disaggregating proteins, also in an autonomous, DnaK-independent fashion. Unfolded proteins bind initially to DnaJ; upon interaction with the DnaJ-bound protein, DnaK hydrolyzes its bound ATP, resulting in the formation of a stable complex. GrpE releases ADP from DnaK; ATP binding to DnaK triggers the release of the substrate protein, thus completing the reaction cycle. Several rounds of ATP-dependent interactions between DnaJ, DnaK and GrpE are required for fully efficient folding. Also involved, together with DnaK and GrpE, in the DNA replication of plasmids through activation of initiation proteins. The protein is Chaperone protein DnaJ of Klebsiella pneumoniae (strain 342).